We begin with the raw amino-acid sequence, 71 residues long: Plasticin-C1 (71 aa).

The first 22 residues, 1 to 22 (MAFLKKSLLLVLFLGLVSLSIC), serve as a signal peptide directing secretion. The propeptide occupies 23 to 45 (EEEKRENEDEEKQEDDDQSENKR). The disordered stretch occupies residues 25-46 (EKRENEDEEKQEDDDQSENKRG). The segment covering 30 to 40 (EDEEKQEDDDQ) has biased composition (acidic residues). An Asparagine amide modification is found at Asn-68. Positions 70–71 (ES) are excised as a propeptide.

The protein belongs to the frog skin active peptide (FSAP) family. Plasticin subfamily. As to expression, expressed by the skin glands.

Its subcellular location is the secreted. The protein resides in the target cell membrane. Its function is as follows. Neutral peptide with no antimicrobial activity. May act in synergy with cationic peptides by enhancing their activity. Has a moderate hemolytic activity. This is Plasticin-C1 from Agalychnis callidryas (Red-eyed tree frog).